Reading from the N-terminus, the 643-residue chain is Asparagine synthetase domain-containing protein 1 (643 aa).

Residue Cys-2 is the For GATase activity of the active site. Positions 2–184 constitute a Glutamine amidotransferase type-2 domain; that stretch reads CGICCSVNFS…ASGLFRIDLK (183 aa). The region spanning 285-601 is the Asparagine synthetase domain; that stretch reads QFIDVLSVAV…GLTASALLPK (317 aa).

In Homo sapiens (Human), this protein is Asparagine synthetase domain-containing protein 1 (ASNSD1).